Consider the following 227-residue polypeptide: Enolase-phosphatase E1 (227 aa).

Residues aspartate 11 and glutamate 13 each coordinate Mg(2+). Residues 118 to 119 (SS) and lysine 161 contribute to the substrate site. Position 186 (aspartate 186) interacts with Mg(2+).

This sequence belongs to the HAD-like hydrolase superfamily. MasA/MtnC family. In terms of assembly, monomer. Requires Mg(2+) as cofactor.

The protein localises to the cytoplasm. It localises to the nucleus. It catalyses the reaction 5-methylsulfanyl-2,3-dioxopentyl phosphate + H2O = 1,2-dihydroxy-5-(methylsulfanyl)pent-1-en-3-one + phosphate. Its pathway is amino-acid biosynthesis; L-methionine biosynthesis via salvage pathway; L-methionine from S-methyl-5-thio-alpha-D-ribose 1-phosphate: step 3/6. It participates in amino-acid biosynthesis; L-methionine biosynthesis via salvage pathway; L-methionine from S-methyl-5-thio-alpha-D-ribose 1-phosphate: step 4/6. Functionally, bifunctional enzyme that catalyzes the enolization of 2,3-diketo-5-methylthiopentyl-1-phosphate (DK-MTP-1-P) into the intermediate 2-hydroxy-3-keto-5-methylthiopentenyl-1-phosphate (HK-MTPenyl-1-P), which is then dephosphorylated to form the acireductone 1,2-dihydroxy-3-keto-5-methylthiopentene (DHK-MTPene). The protein is Enolase-phosphatase E1 of Saccharomyces cerevisiae (strain RM11-1a) (Baker's yeast).